Here is a 209-residue protein sequence, read N- to C-terminus: MASKFLREYKLVVVGGGGEGKSCLTIQLIQSHFVDEYDPTIEESYRKQCVIDDEVALLDVLDTAGQEEYSAMREQYMRTGEGFLLVYSITSRQSFEEIMTFQQQILRVKDKDYFPIIVVGNKCDLDKERVVSKQEGESLARQFGCKFIETSAKSRINVENAFYDLVREIRRYNKEMSNPSGFGARAPDSKMDVSEPGESAGCCGKCIVM.

Residue 15-22 (GGGGEGKS) participates in GTP binding. The Effector region motif lies at 37–45 (YDPTIEESY). Residues 62-66 (DTAGQ) and 121-124 (NKCD) contribute to the GTP site. S-palmitoyl cysteine attachment occurs at residues Cys-202 and Cys-203. Cys-206 carries the post-translational modification Cysteine methyl ester. A lipid anchor (S-geranylgeranyl cysteine) is attached at Cys-206. Residues 207-209 (IVM) constitute a propeptide, removed in mature form.

Belongs to the small GTPase superfamily. Ras family.

The protein resides in the cell membrane. The catalysed reaction is GTP + H2O = GDP + phosphate + H(+). Its activity is regulated as follows. Alternates between an inactive form bound to GDP and an active form bound to GTP. Activated by a guanine nucleotide-exchange factor (GEF) and inactivated by a GTPase-activating protein (GAP). In Laccaria bicolor (Bicoloured deceiver), this protein is Ras-like protein.